The following is a 187-amino-acid chain: Elongation factor P (187 aa).

It belongs to the elongation factor P family.

The protein localises to the cytoplasm. Its pathway is protein biosynthesis; polypeptide chain elongation. In terms of biological role, involved in peptide bond synthesis. Stimulates efficient translation and peptide-bond synthesis on native or reconstituted 70S ribosomes in vitro. Probably functions indirectly by altering the affinity of the ribosome for aminoacyl-tRNA, thus increasing their reactivity as acceptors for peptidyl transferase. The sequence is that of Elongation factor P from Nocardioides sp. (strain ATCC BAA-499 / JS614).